Consider the following 206-residue polypeptide: Large ribosomal subunit protein uL4 (206 aa).

Residues 42 to 94 (RRQQGSHKAQGRGDVSRTGSKMYKQKGTGRARHHSARAPQFRGGGQAHGPVVR) are disordered. Positions 64–77 (YKQKGTGRARHHSA) are enriched in basic residues.

The protein belongs to the universal ribosomal protein uL4 family. Part of the 50S ribosomal subunit.

Functionally, one of the primary rRNA binding proteins, this protein initially binds near the 5'-end of the 23S rRNA. It is important during the early stages of 50S assembly. It makes multiple contacts with different domains of the 23S rRNA in the assembled 50S subunit and ribosome. Its function is as follows. Forms part of the polypeptide exit tunnel. In Brucella abortus biovar 1 (strain 9-941), this protein is Large ribosomal subunit protein uL4.